Consider the following 215-residue polypeptide: Protein GrpE (215 aa).

Positions 1–28 (MKHTSDTPSNSDMPSDSQATQPNASATG) are enriched in polar residues. A disordered region spans residues 1-52 (MKHTSDTPSNSDMPSDSQATQPNASATGQAAHAYSSQAQRASADAQAVAGDE). Over residues 29–52 (QAAHAYSSQAQRASADAQAVAGDE) the composition is skewed to low complexity.

Belongs to the GrpE family. As to quaternary structure, homodimer.

The protein localises to the cytoplasm. Its function is as follows. Participates actively in the response to hyperosmotic and heat shock by preventing the aggregation of stress-denatured proteins, in association with DnaK and GrpE. It is the nucleotide exchange factor for DnaK and may function as a thermosensor. Unfolded proteins bind initially to DnaJ; upon interaction with the DnaJ-bound protein, DnaK hydrolyzes its bound ATP, resulting in the formation of a stable complex. GrpE releases ADP from DnaK; ATP binding to DnaK triggers the release of the substrate protein, thus completing the reaction cycle. Several rounds of ATP-dependent interactions between DnaJ, DnaK and GrpE are required for fully efficient folding. The protein is Protein GrpE of Ralstonia pickettii (strain 12J).